Here is a 185-residue protein sequence, read N- to C-terminus: Ribosome-recycling factor (185 aa).

The protein belongs to the RRF family.

The protein resides in the cytoplasm. Responsible for the release of ribosomes from messenger RNA at the termination of protein biosynthesis. May increase the efficiency of translation by recycling ribosomes from one round of translation to another. The sequence is that of Ribosome-recycling factor from Streptococcus equi subsp. equi (strain 4047).